The sequence spans 37 residues: Large ribosomal subunit protein bL36 (37 aa).

This sequence belongs to the bacterial ribosomal protein bL36 family.

The sequence is that of Large ribosomal subunit protein bL36 from Shewanella baltica (strain OS223).